The primary structure comprises 325 residues: Psp operon transcriptional activator (325 aa).

The 223-residue stretch at 15-237 (FLEVLEQVSH…ELKNVVERSV (223 aa)) folds into the Sigma-54 factor interaction domain. Residues 36–43 (GERGTGKE) and 99–108 (ADGGTLFLDE) contribute to the ATP site. Residues 302 to 321 (QKRAAELLGLTYHQFRALLK) constitute a DNA-binding region (H-T-H motif).

In terms of assembly, forms a complex with PspA, which is composed of around 6 PspF subunits and 6 PspA subunits.

The protein localises to the cytoplasm. With respect to regulation, ATPase activity is inhibited by interaction with PspA. Under inducing conditions, the interaction is disrupted, allowing activation of psp transcription. In terms of biological role, transcriptional activator for the phage shock protein (psp) operon (pspABCDE) and pspG gene. The chain is Psp operon transcriptional activator (pspF) from Escherichia coli (strain K12).